The sequence spans 391 residues: Probable dual-specificity RNA methyltransferase RlmN (391 aa).

The tract at residues 1–33 (MTTPLDTPTREPLPLAPAGPGKLVMSAPRRGKP) is disordered. Positions 12–21 (PLPLAPAGPG) are enriched in low complexity. The Proton acceptor role is filled by Glu124. The region spanning 130-373 (YKNRDTICIS…TTVRDTRGSD (244 aa)) is the Radical SAM core domain. Cys137 and Cys378 form a disulfide bridge. Positions 144, 148, and 151 each coordinate [4Fe-4S] cluster. S-adenosyl-L-methionine is bound by residues 199–200 (GE), Ser233, 256–258 (SLH), and Asn335. The S-methylcysteine intermediate role is filled by Cys378.

This sequence belongs to the radical SAM superfamily. RlmN family. [4Fe-4S] cluster is required as a cofactor.

The protein resides in the cytoplasm. It carries out the reaction adenosine(2503) in 23S rRNA + 2 reduced [2Fe-2S]-[ferredoxin] + 2 S-adenosyl-L-methionine = 2-methyladenosine(2503) in 23S rRNA + 5'-deoxyadenosine + L-methionine + 2 oxidized [2Fe-2S]-[ferredoxin] + S-adenosyl-L-homocysteine. It catalyses the reaction adenosine(37) in tRNA + 2 reduced [2Fe-2S]-[ferredoxin] + 2 S-adenosyl-L-methionine = 2-methyladenosine(37) in tRNA + 5'-deoxyadenosine + L-methionine + 2 oxidized [2Fe-2S]-[ferredoxin] + S-adenosyl-L-homocysteine. In terms of biological role, specifically methylates position 2 of adenine 2503 in 23S rRNA and position 2 of adenine 37 in tRNAs. The sequence is that of Probable dual-specificity RNA methyltransferase RlmN from Kineococcus radiotolerans (strain ATCC BAA-149 / DSM 14245 / SRS30216).